Reading from the N-terminus, the 101-residue chain is Cell division suppressor protein YneA (101 aa).

The region spanning 35 to 86 (MTVTVASGDTLWGLAKQYEPAHGLSPDEFIRWVVDVNRLPSSRLTAGEQIVI) is the LysM domain.

The protein belongs to the YneA family.

It localises to the cytoplasm. Its function is as follows. Inhibits cell division during the SOS response. Affects a later stage of the cell division protein assembly, after the assembly of the Z ring, by probably suppressing recruitment of FtsL and/or DivIC to the division machinery. This is Cell division suppressor protein YneA from Geobacillus thermodenitrificans (strain NG80-2).